An 87-amino-acid polypeptide reads, in one-letter code: Small ribosomal subunit protein bS20 (87 aa).

Belongs to the bacterial ribosomal protein bS20 family.

Its function is as follows. Binds directly to 16S ribosomal RNA. In Geobacter sulfurreducens (strain ATCC 51573 / DSM 12127 / PCA), this protein is Small ribosomal subunit protein bS20.